We begin with the raw amino-acid sequence, 556 residues long: Dihydroxy-acid dehydratase (556 aa).

Residue cysteine 47 coordinates [2Fe-2S] cluster. Aspartate 79 contributes to the Mg(2+) binding site. Cysteine 120 is a binding site for [2Fe-2S] cluster. Positions 121 and 122 each coordinate Mg(2+). Position 122 is an N6-carboxylysine (lysine 122). Residue cysteine 192 coordinates [2Fe-2S] cluster. Position 444 (glutamate 444) interacts with Mg(2+). Serine 470 serves as the catalytic Proton acceptor.

Belongs to the IlvD/Edd family. Homodimer. The cofactor is [2Fe-2S] cluster. It depends on Mg(2+) as a cofactor.

The enzyme catalyses (2R)-2,3-dihydroxy-3-methylbutanoate = 3-methyl-2-oxobutanoate + H2O. It carries out the reaction (2R,3R)-2,3-dihydroxy-3-methylpentanoate = (S)-3-methyl-2-oxopentanoate + H2O. It participates in amino-acid biosynthesis; L-isoleucine biosynthesis; L-isoleucine from 2-oxobutanoate: step 3/4. The protein operates within amino-acid biosynthesis; L-valine biosynthesis; L-valine from pyruvate: step 3/4. Its function is as follows. Functions in the biosynthesis of branched-chain amino acids. Catalyzes the dehydration of (2R,3R)-2,3-dihydroxy-3-methylpentanoate (2,3-dihydroxy-3-methylvalerate) into 2-oxo-3-methylpentanoate (2-oxo-3-methylvalerate) and of (2R)-2,3-dihydroxy-3-methylbutanoate (2,3-dihydroxyisovalerate) into 2-oxo-3-methylbutanoate (2-oxoisovalerate), the penultimate precursor to L-isoleucine and L-valine, respectively. This is Dihydroxy-acid dehydratase from Prochlorococcus marinus (strain MIT 9211).